The chain runs to 477 residues: MKVTLSEFERAGVMVVGDVMLDRYWYGPTSRISPEAPVPVVKVNTIEERPGGAANVAMNIASLGANARLVGLTGIDDAARALSKSLADVNVKCDFVSVPTHPTITKLRVLSRNQQLIRLDFEEGFEGVDPQPLHERINQALSSIGALVLSDYAKGALASVQQMIQLARKAGVPVLIDPKGTDFERYRGATLLTPNLSEFEAVVGKCKTEEEIVERGMKLIADYELSALLVTRSEQGMSLLQPGKAPLHMPTQAQEVYDVTGAGDTVIGVLAATLAAGNSLEEACFFANAAAGVVVGKLGTSTVSPIELENAVRGRADTGFGVMTEEELKLAVAAARKRGEKVVMTNGVFDILHAGHVSYLANARKLGDRLIVAVNSDASTKRLKGDSRPVNPLEQRMIVLGALEAVDWVVSFEEDTPQRLIAGILPDLLVKGGDYKPEEIAGSKEVWANGGEVLVLNFEDGCSTTNIIKKIQQDKKG.

Positions 1–318 are ribokinase; it reads MKVTLSEFER…ENAVRGRADT (318 aa). K179 carries the N6-acetyllysine modification. An ATP-binding site is contributed by 195–198; the sequence is NLSE. D264 is an active-site residue. Residues 344–477 are cytidylyltransferase; sequence MTNGVFDILH…IKKIQQDKKG (134 aa).

This sequence in the N-terminal section; belongs to the carbohydrate kinase PfkB family. In the C-terminal section; belongs to the cytidylyltransferase family. As to quaternary structure, homodimer.

The enzyme catalyses D-glycero-beta-D-manno-heptose 7-phosphate + ATP = D-glycero-beta-D-manno-heptose 1,7-bisphosphate + ADP + H(+). It catalyses the reaction D-glycero-beta-D-manno-heptose 1-phosphate + ATP + H(+) = ADP-D-glycero-beta-D-manno-heptose + diphosphate. The protein operates within nucleotide-sugar biosynthesis; ADP-L-glycero-beta-D-manno-heptose biosynthesis; ADP-L-glycero-beta-D-manno-heptose from D-glycero-beta-D-manno-heptose 7-phosphate: step 1/4. It participates in nucleotide-sugar biosynthesis; ADP-L-glycero-beta-D-manno-heptose biosynthesis; ADP-L-glycero-beta-D-manno-heptose from D-glycero-beta-D-manno-heptose 7-phosphate: step 3/4. Its function is as follows. Catalyzes the phosphorylation of D-glycero-D-manno-heptose 7-phosphate at the C-1 position to selectively form D-glycero-beta-D-manno-heptose-1,7-bisphosphate. In terms of biological role, catalyzes the ADP transfer from ATP to D-glycero-beta-D-manno-heptose 1-phosphate, yielding ADP-D-glycero-beta-D-manno-heptose. This is Bifunctional protein HldE from Shigella boydii serotype 18 (strain CDC 3083-94 / BS512).